The chain runs to 137 residues: MAIIIDPIADMFVRMKNAISRKYYEVTLPHSAKKVKILEIFKKEGYISDFEVLTNEKSTFKEIKITLKYKGMNQNQSAISGIKRVSKPGLKVYSSSEKLPRVLSGFGTAIISTSKGLLTDKEARKANVGGEVIAFIW.

It belongs to the universal ribosomal protein uS8 family. Part of the 30S ribosomal subunit. Contacts proteins S5 and S12.

One of the primary rRNA binding proteins, it binds directly to 16S rRNA central domain where it helps coordinate assembly of the platform of the 30S subunit. This Metamycoplasma arthritidis (strain 158L3-1) (Mycoplasma arthritidis) protein is Small ribosomal subunit protein uS8.